The primary structure comprises 280 residues: Manganese transport system membrane protein MntC (280 aa).

9 helical membrane-spanning segments follow: residues 16–36 (ALITSVTVGIVSGVIGSFIIL), 41–61 (LMGDAISHAVLPGVAISYMMG), 62–82 (MNFFIGAATFGIAAALGIGFV), 92–112 (TAIGIVFSAFFALGIILISFA), 137–157 (TIIIAILVISLVAIFYKEFLV), 168–188 (YGLNVRFLHYFLMLLLTLVTV), 193–213 (TVGIILVVAMLITPAATAYLL), 221–241 (IMLASTFGAVSAIIGLYFSYI), and 244–264 (LASGAAMVLVATIIFFIAFLF).

It belongs to the ABC-3 integral membrane protein family.

The protein localises to the cell membrane. This protein is probably a component of a manganese permease, a binding protein-dependent, ATP-driven transport system. This Listeria innocua serovar 6a (strain ATCC BAA-680 / CLIP 11262) protein is Manganese transport system membrane protein MntC (mntC).